The following is a 379-amino-acid chain: Anhydro-N-acetylmuramic acid kinase (379 aa).

ATP is bound at residue 9–16 (GTSADGVD).

This sequence belongs to the anhydro-N-acetylmuramic acid kinase family.

The enzyme catalyses 1,6-anhydro-N-acetyl-beta-muramate + ATP + H2O = N-acetyl-D-muramate 6-phosphate + ADP + H(+). It functions in the pathway amino-sugar metabolism; 1,6-anhydro-N-acetylmuramate degradation. Its pathway is cell wall biogenesis; peptidoglycan recycling. In terms of biological role, catalyzes the specific phosphorylation of 1,6-anhydro-N-acetylmuramic acid (anhMurNAc) with the simultaneous cleavage of the 1,6-anhydro ring, generating MurNAc-6-P. Is required for the utilization of anhMurNAc either imported from the medium or derived from its own cell wall murein, and thus plays a role in cell wall recycling. This is Anhydro-N-acetylmuramic acid kinase from Prochlorococcus marinus (strain MIT 9211).